The primary structure comprises 104 residues: Replication restart protein PriB (104 aa).

One can recognise an SSB domain in the interval 1-101 (MTNRLVLSGT…LHAEQIELID (101 aa)).

It belongs to the PriB family. In terms of assembly, homodimer. Interacts with PriA and DnaT. Component of the replication restart primosome. Primosome assembly occurs via a 'hand-off' mechanism. PriA binds to replication forks, subsequently PriB then DnaT bind; DnaT then displaces ssDNA to generate the helicase loading substrate.

Involved in the restart of stalled replication forks, which reloads the replicative helicase on sites other than the origin of replication; the PriA-PriB pathway is the major replication restart pathway. During primosome assembly it facilitates complex formation between PriA and DnaT on DNA; stabilizes PriA on DNA. Stimulates the DNA unwinding activity of PriA helicase. The protein is Replication restart protein PriB of Shigella dysenteriae serotype 1 (strain Sd197).